We begin with the raw amino-acid sequence, 308 residues long: Phenylcoumaran benzylic ether reductase Pyrc5 (308 aa).

NADP(+) contacts are provided by residues 11–17 (GGTGYIG), Arg36, and Lys45. Catalysis depends on Lys133, which acts as the Proton acceptor. Residue Arg137 coordinates NADP(+).

Belongs to the NmrA-type oxidoreductase family. Isoflavone reductase subfamily.

The catalysed reaction is (-)-dehydrodiconiferyl alcohol + NADPH + H(+) = (S)-isodihydrodehydrodiconiferyl alcohol + NADP(+). It catalyses the reaction (+)-dehydrodiconiferyl alcohol + NADPH + H(+) = (R)-isodihydrodehydrodiconiferyl alcohol + NADP(+). In terms of biological role, oxidoreductase involved in lignan biosynthesis. Catalyzes the NADPH-dependent reduction of phenylcoumaran benzylic ethers. Converts dehydrodiconiferyl alcohol (DDC) to isodihydrodehydrodiconiferyl alcohol (IDDDC). The chain is Phenylcoumaran benzylic ether reductase Pyrc5 from Pyrus communis (Pear).